The primary structure comprises 1135 residues: Receptor-type guanylate cyclase gcy-4 (1135 aa).

A signal peptide spans 1–20; that stretch reads MTQLLRFLLILSIFCDFSHS. The Extracellular portion of the chain corresponds to 21–483; that stretch reads QRPTIRVGIA…CPIPFFDQYR (463 aa). Residues Asn37, Asn193, Asn209, Asn251, Asn349, Asn375, Asn431, Asn436, and Asn447 are each glycosylated (N-linked (GlcNAc...) asparagine). A helical transmembrane segment spans residues 484–504; it reads LLIFVFVIVAGLLILAIFTCL. Over 505–1135 the chain is Cytoplasmic; the sequence is TSMVRNQRAE…VMRREMMRVS (631 aa). Residues 535–560 form a disordered region; sequence KGRRLSTDSENSTVTKSSKGSSSKNF. The region spanning 545–837 is the Protein kinase domain; sequence NSTVTKSSKG…KDNLMDHVFS (293 aa). Residues 546–560 show a composition bias toward low complexity; that stretch reads STVTKSSKGSSSKNF. A Guanylate cyclase domain is found at 895–1025; the sequence is TVFFSDLVKF…DTVNTASRME (131 aa).

It belongs to the adenylyl cyclase class-4/guanylyl cyclase family. Expressed bilaterally in ASE neurons.

The protein resides in the cell membrane. It carries out the reaction GTP = 3',5'-cyclic GMP + diphosphate. Guanylate cyclase involved in the production of the second messenger cGMP. Regulates chemotaxis responses toward salt ions in ASE sensory neurons. This is Receptor-type guanylate cyclase gcy-4 from Caenorhabditis briggsae.